A 157-amino-acid polypeptide reads, in one-letter code: Putative gamma-glutamylcyclotransferase CG2811 (157 aa).

Residue 14–17 participates in substrate binding; it reads YGTL. Catalysis depends on E89, which acts as the Proton acceptor.

The protein belongs to the gamma-glutamylcyclotransferase family.

Its function is as follows. Putative gamma-glutamylcyclotransferase. In Drosophila melanogaster (Fruit fly), this protein is Putative gamma-glutamylcyclotransferase CG2811.